We begin with the raw amino-acid sequence, 662 residues long: Bifunctional polymyxin resistance protein ArnA (662 aa).

Positions 1 to 307 (MTSKAVVFAY…ELGLVEGARL (307 aa)) are formyltransferase ArnAFT. The active-site Proton donor; for formyltransferase activity is the histidine 106. Residues arginine 116 and 138 to 142 (IERAD) each bind (6R)-10-formyltetrahydrofolate. A dehydrogenase ArnADH region spans residues 316-662 (RRTRVLILGV…EALREREAQA (347 aa)). NAD(+) contacts are provided by residues aspartate 349 and 370–371 (DI). Residues alanine 395, tyrosine 400, and 434–435 (TS) each bind UDP-alpha-D-glucuronate. The Proton acceptor; for decarboxylase activity role is filled by glutamate 436. UDP-alpha-D-glucuronate-binding positions include arginine 462, asparagine 493, 527–536 (RLVDGGAQKR), and tyrosine 614. Catalysis depends on arginine 620, which acts as the Proton donor; for decarboxylase activity.

It in the N-terminal section; belongs to the Fmt family. UDP-L-Ara4N formyltransferase subfamily. In the C-terminal section; belongs to the NAD(P)-dependent epimerase/dehydratase family. UDP-glucuronic acid decarboxylase subfamily. In terms of assembly, homohexamer, formed by a dimer of trimers.

It carries out the reaction UDP-alpha-D-glucuronate + NAD(+) = UDP-beta-L-threo-pentopyranos-4-ulose + CO2 + NADH. The catalysed reaction is UDP-4-amino-4-deoxy-beta-L-arabinose + (6R)-10-formyltetrahydrofolate = UDP-4-deoxy-4-formamido-beta-L-arabinose + (6S)-5,6,7,8-tetrahydrofolate + H(+). It functions in the pathway nucleotide-sugar biosynthesis; UDP-4-deoxy-4-formamido-beta-L-arabinose biosynthesis; UDP-4-deoxy-4-formamido-beta-L-arabinose from UDP-alpha-D-glucuronate: step 1/3. The protein operates within nucleotide-sugar biosynthesis; UDP-4-deoxy-4-formamido-beta-L-arabinose biosynthesis; UDP-4-deoxy-4-formamido-beta-L-arabinose from UDP-alpha-D-glucuronate: step 3/3. Its pathway is bacterial outer membrane biogenesis; lipopolysaccharide biosynthesis. Bifunctional enzyme that catalyzes the oxidative decarboxylation of UDP-glucuronic acid (UDP-GlcUA) to UDP-4-keto-arabinose (UDP-Ara4O) and the addition of a formyl group to UDP-4-amino-4-deoxy-L-arabinose (UDP-L-Ara4N) to form UDP-L-4-formamido-arabinose (UDP-L-Ara4FN). The modified arabinose is attached to lipid A and is required for resistance to polymyxin and cationic antimicrobial peptides. The polypeptide is Bifunctional polymyxin resistance protein ArnA (Pseudomonas aeruginosa (strain LESB58)).